Reading from the N-terminus, the 273-residue chain is Dermonecrotic toxin (273 aa).

Glu-20 and Asp-22 together coordinate Mg(2+). His-35 serves as the catalytic Nucleophile. Residues Cys-39 and Cys-45 are joined by a disulfide bond. Residue Asp-79 coordinates Mg(2+).

Belongs to the arthropod phospholipase D family. Class I subfamily. Requires Mg(2+) as cofactor. As to expression, expressed by the venom gland.

It localises to the secreted. The catalysed reaction is an N-(acyl)-sphingosylphosphocholine = an N-(acyl)-sphingosyl-1,3-cyclic phosphate + choline. It catalyses the reaction an N-(acyl)-sphingosylphosphoethanolamine = an N-(acyl)-sphingosyl-1,3-cyclic phosphate + ethanolamine. It carries out the reaction a 1-acyl-sn-glycero-3-phosphocholine = a 1-acyl-sn-glycero-2,3-cyclic phosphate + choline. The enzyme catalyses a 1-acyl-sn-glycero-3-phosphoethanolamine = a 1-acyl-sn-glycero-2,3-cyclic phosphate + ethanolamine. In terms of biological role, dermonecrotic toxins cleave the phosphodiester linkage between the phosphate and headgroup of certain phospholipids (sphingolipid and lysolipid substrates), forming an alcohol (often choline) and a cyclic phosphate. This toxin acts on sphingomyelin (SM). It may also act on ceramide phosphoethanolamine (CPE), lysophosphatidylcholine (LPC) and lysophosphatidylethanolamine (LPE), but not on lysophosphatidylserine (LPS), and lysophosphatidylglycerol (LPG). It acts by transphosphatidylation, releasing exclusively cyclic phosphate products as second products. Induces dermonecrosis, hemolysis, increased vascular permeability, edema, inflammatory response, and platelet aggregation. The protein is Dermonecrotic toxin of Loxosceles laeta (South American recluse spider).